We begin with the raw amino-acid sequence, 170 residues long: MIYMVSVSMMVLVLGLVAVASNPSPFYAALGLVLAAGAGCLVIVSFGSSFLSIVLFLIYLGGMLVVFAYSAARAKPYPEAWGSWSVVFYVLVYLIGVLVWYLFLGGVEVDGMNKSSELGSYVMRGDWVGVALMYSCWWVIIVYWWVSIIINFVCGIWVNSKSMWWESSCV.

Transmembrane regions (helical) follow at residues 1–21 (MIYM…AVAS), 26–46 (FYAA…IVSF), 49–69 (SFLS…VFAY), 86–106 (VVFY…FLGG), and 138–158 (WVII…GIWV).

This sequence belongs to the complex I subunit 6 family. In terms of assembly, core subunit of respiratory chain NADH dehydrogenase (Complex I) which is composed of 45 different subunits.

Its subcellular location is the mitochondrion inner membrane. It carries out the reaction a ubiquinone + NADH + 5 H(+)(in) = a ubiquinol + NAD(+) + 4 H(+)(out). Functionally, core subunit of the mitochondrial membrane respiratory chain NADH dehydrogenase (Complex I) which catalyzes electron transfer from NADH through the respiratory chain, using ubiquinone as an electron acceptor. Essential for the catalytic activity and assembly of complex I. This is NADH-ubiquinone oxidoreductase chain 6 (mt-nd6) from Xenopus laevis (African clawed frog).